The primary structure comprises 274 residues: Large ribosomal subunit protein uL2 (274 aa).

A disordered region spans residues methionine 225–lysine 274. Basic residues predominate over residues lysine 257–lysine 274.

This sequence belongs to the universal ribosomal protein uL2 family. As to quaternary structure, part of the 50S ribosomal subunit. Forms a bridge to the 30S subunit in the 70S ribosome.

Its function is as follows. One of the primary rRNA binding proteins. Required for association of the 30S and 50S subunits to form the 70S ribosome, for tRNA binding and peptide bond formation. It has been suggested to have peptidyltransferase activity; this is somewhat controversial. Makes several contacts with the 16S rRNA in the 70S ribosome. In Carboxydothermus hydrogenoformans (strain ATCC BAA-161 / DSM 6008 / Z-2901), this protein is Large ribosomal subunit protein uL2.